Reading from the N-terminus, the 442-residue chain is Serine protease AprX (442 aa).

In terms of domain architecture, Peptidase S8 spans Lys-122–Val-439. Residues Asp-155 and His-187 each act as charge relay system in the active site. The tract at residues Asp-318–Pro-337 is disordered. Ser-384 serves as the catalytic Charge relay system. The tract at residues Glu-423–Gln-442 is disordered.

This sequence belongs to the peptidase S8 family.

Its subcellular location is the cytoplasm. Is completely inhibited by phenylmethanesulphonylfluoride (PMSF) in vitro. In terms of biological role, displays serine protease activity. Seems to have a broad substrate specificity. This Bacillus subtilis (strain 168) protein is Serine protease AprX (aprX).